The chain runs to 698 residues: Elongation factor G 1 (698 aa).

The region spanning 8 to 290 is the tr-type G domain; sequence ERYRNIGICA…AVVEFLPAPV (283 aa). GTP is bound by residues 17–24, 88–92, and 142–145; these read AHVDAGKT, DTPGH, and NKMD.

Belongs to the TRAFAC class translation factor GTPase superfamily. Classic translation factor GTPase family. EF-G/EF-2 subfamily.

It localises to the cytoplasm. Catalyzes the GTP-dependent ribosomal translocation step during translation elongation. During this step, the ribosome changes from the pre-translocational (PRE) to the post-translocational (POST) state as the newly formed A-site-bound peptidyl-tRNA and P-site-bound deacylated tRNA move to the P and E sites, respectively. Catalyzes the coordinated movement of the two tRNA molecules, the mRNA and conformational changes in the ribosome. The polypeptide is Elongation factor G 1 (Shewanella oneidensis (strain ATCC 700550 / JCM 31522 / CIP 106686 / LMG 19005 / NCIMB 14063 / MR-1)).